The chain runs to 223 residues: Large ribosomal subunit protein bL21 (223 aa).

A disordered region spans residues 110–149; the sequence is TALKSTTAEPKAADAPKAKAKAAPKAEKAAAPKAEKAPAK. The segment covering 133–147 has biased composition (basic and acidic residues); it reads PKAEKAAAPKAEKAP.

It belongs to the bacterial ribosomal protein bL21 family. Part of the 50S ribosomal subunit. Contacts protein L20.

In terms of biological role, this protein binds to 23S rRNA in the presence of protein L20. The sequence is that of Large ribosomal subunit protein bL21 from Maricaulis maris (strain MCS10) (Caulobacter maris).